The sequence spans 828 residues: Periplasmic nitrate reductase (828 aa).

Positions 1–33 form a signal peptide, tat-type signal; that stretch reads MKLSRRDFMKANAAVAAAAAAGLTIPTVVQAAA. Residues 39-95 form the 4Fe-4S Mo/W bis-MGD-type domain; the sequence is IKWDKAPCRFCGTGCGVLVGTQNGRIVASQGDPEAAVNRGLSCIKGYFLPKIMYGKD. [4Fe-4S] cluster-binding residues include cysteine 46, cysteine 49, cysteine 53, and cysteine 81. Residues lysine 83, glutamine 150, asparagine 175, cysteine 179, 212–219, 243–247, 262–264, methionine 372, glutamine 376, asparagine 482, 508–509, lysine 531, aspartate 558, and 718–727 contribute to the Mo-bis(molybdopterin guanine dinucleotide) site; these read WGSNMAEM, STFEH, QTD, SD, and TGRVLEHWHT. Phenylalanine 794 contributes to the substrate binding site. Residues asparagine 802 and lysine 819 each coordinate Mo-bis(molybdopterin guanine dinucleotide).

It belongs to the prokaryotic molybdopterin-containing oxidoreductase family. NasA/NapA/NarB subfamily. As to quaternary structure, component of the periplasmic nitrate reductase NapAB complex composed of NapA and NapB. It depends on [4Fe-4S] cluster as a cofactor. The cofactor is Mo-bis(molybdopterin guanine dinucleotide). In terms of processing, predicted to be exported by the Tat system. The position of the signal peptide cleavage has not been experimentally proven.

Its subcellular location is the periplasm. It catalyses the reaction 2 Fe(II)-[cytochrome] + nitrate + 2 H(+) = 2 Fe(III)-[cytochrome] + nitrite + H2O. Catalytic subunit of the periplasmic nitrate reductase complex NapAB. Receives electrons from NapB and catalyzes the reduction of nitrate to nitrite. The polypeptide is Periplasmic nitrate reductase (Serratia proteamaculans (strain 568)).